The sequence spans 426 residues: Serine hydroxymethyltransferase (426 aa).

Residues L122 and 126-128 (GHL) each bind (6S)-5,6,7,8-tetrahydrofolate. The residue at position 231 (K231) is an N6-(pyridoxal phosphate)lysine.

This sequence belongs to the SHMT family. Homodimer. It depends on pyridoxal 5'-phosphate as a cofactor.

The protein localises to the cytoplasm. It carries out the reaction (6R)-5,10-methylene-5,6,7,8-tetrahydrofolate + glycine + H2O = (6S)-5,6,7,8-tetrahydrofolate + L-serine. Its pathway is one-carbon metabolism; tetrahydrofolate interconversion. It participates in amino-acid biosynthesis; glycine biosynthesis; glycine from L-serine: step 1/1. Catalyzes the reversible interconversion of serine and glycine with tetrahydrofolate (THF) serving as the one-carbon carrier. This reaction serves as the major source of one-carbon groups required for the biosynthesis of purines, thymidylate, methionine, and other important biomolecules. Also exhibits THF-independent aldolase activity toward beta-hydroxyamino acids, producing glycine and aldehydes, via a retro-aldol mechanism. This is Serine hydroxymethyltransferase from Koribacter versatilis (strain Ellin345).